The chain runs to 291 residues: MERNSSLWKNLIDEHPVCTTWKQEAEGAIYHLASILFVVGFMGGSGFFGLLYVFSLLGLGFLCSAVWAWVDVCAADIFSWNFVLFVICFMQFVHIAYQVRSITFAREFQVLYSSLFQPLGISLPVFRTIALSSEVVTLEKEHCYAMQGKTSIDKLSLLVSGRIRVTVDGEFLHYIFPLQFLDSPEWDSLRPTEEGIFQVTLTAETDCRYVSWRRKKLYLLFAQHRYISRLFSVLIGSDIADKLYALNDRVYIGKRYHYDIRLPNFYQMSTPEIRRSPLTQHFQNSRRYCDK.

N-linked (GlcNAc...) asparagine glycosylation occurs at Asn-4. Helical transmembrane passes span 27 to 44 (GAIY…FMGG), 48 to 70 (FGLL…WAWV), and 77 to 99 (IFSW…AYQV).

This sequence belongs to the popeye family. As to expression, expressed predominantly in skeletal muscle (at protein level). Also detected in heart.

It localises to the membrane. In terms of biological role, may play a role in the maintenance of heart function mediated, at least in part, through cAMP-binding. May play a role in the regulation of KCNK2/TREK-1-mediated current amplitude. This is Popeye domain-containing protein 3 (POPDC3) from Homo sapiens (Human).